A 115-amino-acid polypeptide reads, in one-letter code: Large ribosomal subunit protein bL19 (115 aa).

It belongs to the bacterial ribosomal protein bL19 family.

Functionally, this protein is located at the 30S-50S ribosomal subunit interface and may play a role in the structure and function of the aminoacyl-tRNA binding site. The chain is Large ribosomal subunit protein bL19 from Streptococcus mutans serotype c (strain ATCC 700610 / UA159).